The chain runs to 603 residues: Elongation factor 4 (603 aa).

Residues 7-189 enclose the tr-type G domain; sequence SRIRNFSIIA…SIVHLVPPPE (183 aa). GTP-binding positions include 19-24 and 136-139; these read DHGKST and NKID.

This sequence belongs to the TRAFAC class translation factor GTPase superfamily. Classic translation factor GTPase family. LepA subfamily.

Its subcellular location is the cell inner membrane. It carries out the reaction GTP + H2O = GDP + phosphate + H(+). Its function is as follows. Required for accurate and efficient protein synthesis under certain stress conditions. May act as a fidelity factor of the translation reaction, by catalyzing a one-codon backward translocation of tRNAs on improperly translocated ribosomes. Back-translocation proceeds from a post-translocation (POST) complex to a pre-translocation (PRE) complex, thus giving elongation factor G a second chance to translocate the tRNAs correctly. Binds to ribosomes in a GTP-dependent manner. The polypeptide is Elongation factor 4 (Acaryochloris marina (strain MBIC 11017)).